The primary structure comprises 473 residues: Mitochondrial adenyl nucleotide antiporter SLC25A24-A (473 aa).

A regulatory N-terminal domain region spans residues 1–173; it reads MLEQVQKFLL…RFWKHSTVLD (173 aa). The Mitochondrial intermembrane segment spans residues 1–197; the sequence is MLEQVQKFLL…EKKTGQWWKH (197 aa). EF-hand domains follow at residues 19 to 54, 55 to 88, 86 to 121, and 122 to 157; these read DSHT…MGMA, VGKG…EEHE, EHEK…LGIN, and ISLD…NPAD. Ca(2+)-binding residues include D32, N34, D36, K38, E43, D68, N70, D72, H74, E79, D99, N101, D103, K105, E110, D135, D137, T139, T141, and E146. Positions 159 to 168 are linker region; it reads IQQIIRFWKH. Residues 174-473 form a C-terminal transmembrane transporter domain region; sequence IGDSLTIPDE…YEKMKIQLGI (300 aa). Solcar repeat units follow at residues 192-277, 285-370, and 382-470; these read GQWW…YKKL, LGTA…LKNY, and PGVL…MKIQ. A helical membrane pass occupies residues 198–215; that stretch reads LLAGGMAGAVSRTGTAPL. Residues 216-251 lie on the Mitochondrial matrix side of the membrane; that stretch reads DRLKVMMQVHGTKGNSNIITGLKQMVKEGGVRSLWR. A helical transmembrane segment spans residues 252 to 271; that stretch reads GNGVNVIKIAPETAMKFWAY. Residues 272–294 lie on the Mitochondrial intermembrane side of the membrane; that stretch reads EQYKKLFTSESGKLGTAERFIAG. Residues 295-308 traverse the membrane as a helical segment; it reads SLAGATAQTSIYPM. Topologically, residues 309 to 344 are mitochondrial matrix; the sequence is EVLKTRLAVGKTGQYSGMFDCAKKIMQKEGILAFYK. Residues 345–364 traverse the membrane as a helical segment; it reads GYIPNILGIIPYAGIDLAIY. Over 365–387 the chain is Mitochondrial intermembrane; the sequence is ETLKNYWLQNYAKDSANPGVLVL. Residues 388 to 405 traverse the membrane as a helical segment; the sequence is LGCGTVSSTCGQLASYPL. Residues 406–444 lie on the Mitochondrial matrix side of the membrane; it reads ALIRTRMQAQASIEGAPQLNMGGLFRKIVAKEGFFGLYT. The helical transmembrane segment at 445–464 threads the bilayer; the sequence is GIAPNFLKVLPAVSISYVVY. At 465–473 the chain is on the mitochondrial intermembrane side; it reads EKMKIQLGI.

The protein belongs to the mitochondrial carrier (TC 2.A.29) family. As to quaternary structure, monomer.

It localises to the mitochondrion inner membrane. The catalysed reaction is Mg(2+)(out) + phosphate(in) + ATP(out) = Mg(2+)(in) + phosphate(out) + ATP(in). It catalyses the reaction ADP(out) + phosphate(in) + H(+)(out) = ADP(in) + phosphate(out) + H(+)(in). It carries out the reaction AMP(out) + phosphate(in) = AMP(in) + phosphate(out). The enzyme catalyses phosphate(in) + ATP(out) + 2 H(+)(out) = phosphate(out) + ATP(in) + 2 H(+)(in). The catalysed reaction is dADP(in) + ADP(out) = dADP(out) + ADP(in). It catalyses the reaction Mg(2+)(in) + ADP(out) + ATP(in) + H(+)(out) = Mg(2+)(out) + ADP(in) + ATP(out) + H(+)(in). It carries out the reaction ADP(out) + diphosphate(in) = ADP(in) + diphosphate(out). The enzyme catalyses dAMP(in) + ADP(out) + H(+)(out) = dAMP(out) + ADP(in) + H(+)(in). The catalysed reaction is 3'-AMP(in) + ADP(out) + H(+)(out) = 3'-AMP(out) + ADP(in) + H(+)(in). It catalyses the reaction dAMP(out) + phosphate(in) = dAMP(in) + phosphate(out). It carries out the reaction 3'-AMP(out) + phosphate(in) = 3'-AMP(in) + phosphate(out). The enzyme catalyses dADP(out) + phosphate(in) + H(+)(out) = dADP(in) + phosphate(out) + H(+)(in). Activated by an increase in cytosolic calcium levels that induce a conformational change of the N-terminal regulatory domain, uncapping the channel and allowing transport. Inhibited by bathophenanthroline, mersalyl, p-hydroxymercuribenzoate, bromcresol purple and tannic acid. Electroneutral antiporter that mediates the transport of adenyl nucleotides through the inner mitochondrial membrane. Originally identified as an ATP-magnesium/inorganic phosphate antiporter, it also acts as a broad specificity adenyl nucleotide antiporter. By regulating the mitochondrial matrix adenyl nucleotide pool could adapt to changing cellular energetic demands and indirectly regulate adenyl nucleotide-dependent metabolic pathways. The chain is Mitochondrial adenyl nucleotide antiporter SLC25A24-A (slc25a24-a) from Xenopus laevis (African clawed frog).